The primary structure comprises 246 residues: MGDGDSPMCLSAVSFKGIRCWLDKLLLWALTISITLQNAAVDCTRVENNELPSPNLNSSMNVVRMGQNVSLSCSTKNTSVDITYSLFWGTKYLESKRRRGGAVDFHLRISNANESGPYKCKVNVSNLMKYSQDFNFTMAKDESCPSCRLSLLLPGLLLGILVIVLVLAYLIHLKYKKGKKTQREDQSKGSGDAPAQDELYVNACKTQTEQPQEIHYATPVFKEMAPMEEEGGTDGKADYIYSELTH.

An N-terminal signal peptide occupies residues 1 to 33 (MGDGDSPMCLSAVSFKGIRCWLDKLLLWALTIS). The Extracellular portion of the chain corresponds to 34–150 (ITLQNAAVDC…DESCPSCRLS (117 aa)). Residues 52–131 (PSPNLNSSMN…VNVSNLMKYS (80 aa)) form the Ig-like C2-type domain. The N-linked (GlcNAc...) asparagine glycan is linked to Asn-68. Cysteines 73 and 120 form a disulfide. Residues 151 to 171 (LLLPGLLLGILVIVLVLAYLI) traverse the membrane as a helical segment. Residues 172–246 (HLKYKKGKKT…ADYIYSELTH (75 aa)) lie on the Cytoplasmic side of the membrane. 2 consecutive short sequence motifs (ITIM motif) follow at residues 214-219 (IHYATP) and 239-244 (YIYSEL). A phosphotyrosine mark is found at Tyr-216 and Tyr-241.

Monomer. Interacts (tyrosine-phosphorylated) with PTPN6, PTPN11 and INPP5D. In terms of processing, N-glycosylated. Expressed in myeloid cells (dendritic cells, macrophages and neutrophils but not in T-cells, B-cells or natural killer cells) and mast cells (at protein level).

It is found in the cell membrane. The protein localises to the secreted. Immunoglobulin-like receptor which plays an inhibitory role in degranulation of mast cells. Negatively regulates IgE-mediated mast cell activation and suppresses the type I immediate hypersensitivity reaction. This chain is Allergin-1 (Milr1), found in Mus musculus (Mouse).